A 71-amino-acid polypeptide reads, in one-letter code: ATP synthase subunit c (71 aa).

A run of 2 helical transmembrane segments spans residues 4 to 24 (IAAAIAIMGAAIGAGYGNGQV) and 47 to 67 (FIGVALVEAVPILGVVIALIL).

This sequence belongs to the ATPase C chain family. In terms of assembly, F-type ATPases have 2 components, F(1) - the catalytic core - and F(0) - the membrane proton channel. F(1) has five subunits: alpha(3), beta(3), gamma(1), delta(1), epsilon(1). F(0) has three main subunits: a(1), b(2) and c(10-14). The alpha and beta chains form an alternating ring which encloses part of the gamma chain. F(1) is attached to F(0) by a central stalk formed by the gamma and epsilon chains, while a peripheral stalk is formed by the delta and b chains.

The protein resides in the cell membrane. F(1)F(0) ATP synthase produces ATP from ADP in the presence of a proton or sodium gradient. F-type ATPases consist of two structural domains, F(1) containing the extramembraneous catalytic core and F(0) containing the membrane proton channel, linked together by a central stalk and a peripheral stalk. During catalysis, ATP synthesis in the catalytic domain of F(1) is coupled via a rotary mechanism of the central stalk subunits to proton translocation. In terms of biological role, key component of the F(0) channel; it plays a direct role in translocation across the membrane. A homomeric c-ring of between 10-14 subunits forms the central stalk rotor element with the F(1) delta and epsilon subunits. This is ATP synthase subunit c from Enterococcus hirae (strain ATCC 9790 / DSM 20160 / JCM 8729 / LMG 6399 / NBRC 3181 / NCIMB 6459 / NCDO 1258 / NCTC 12367 / WDCM 00089 / R).